The chain runs to 256 residues: Floral homeotic protein APETALA 1 (256 aa).

In terms of domain architecture, MADS-box spans 1 to 61 (MGRGRVQLKR…GKLFEYSTDS (61 aa)). Positions 88–178 (NTNWSMEYNR…SKQIKEREKV (91 aa)) constitute a K-box domain. Positions 180-206 (RAQQEQWDQQNHGQNMPPPPPPQEHQI) are disordered.

In terms of assembly, homodimer capable of binding to CArG-box sequences.

It is found in the nucleus. Functionally, transcription factor that promotes early floral meristem identity in synergy with LEAFY. Displays a redundant function with CAULIFLOWER in the up-regulation of LEAFY. Required subsequently for the transition of an inflorescence meristem into a floral meristem, and for the normal development of sepals and petals in flowers. Regulates positively B class homeotic proteins. In Brassica rapa subsp. pekinensis (Chinese cabbage), this protein is Floral homeotic protein APETALA 1 (AP1).